Here is a 388-residue protein sequence, read N- to C-terminus: Protein-glutamate methylesterase/protein-glutamine glutaminase 1 (388 aa).

The Response regulatory domain occupies 4–121 (QVLVVDDSSF…ATNKDEAIRL (118 aa)). At Asp-55 the chain carries 4-aspartylphosphate. The interval 149–190 (SARAGLSSTSPTLGSSTLGRSPASGLASSASRNSPTVSTPAS) is disordered. Over residues 153–169 (GLSSTSPTLGSSTLGRS) the composition is skewed to low complexity. Over residues 174-189 (LASSASRNSPTVSTPA) the composition is skewed to polar residues. Residues 188–388 (PASAIRASGK…EAILKESGRG (201 aa)) form the CheB-type methylesterase domain. Active-site residues include Ser-207, His-234, and Asp-330.

The protein belongs to the CheB family. In terms of processing, phosphorylated by CheA. Phosphorylation of the N-terminal regulatory domain activates the methylesterase activity.

It localises to the cytoplasm. The catalysed reaction is [protein]-L-glutamate 5-O-methyl ester + H2O = L-glutamyl-[protein] + methanol + H(+). It carries out the reaction L-glutaminyl-[protein] + H2O = L-glutamyl-[protein] + NH4(+). In terms of biological role, involved in chemotaxis. Part of a chemotaxis signal transduction system that modulates chemotaxis in response to various stimuli. Catalyzes the demethylation of specific methylglutamate residues introduced into the chemoreceptors (methyl-accepting chemotaxis proteins or MCP) by CheR. Also mediates the irreversible deamidation of specific glutamine residues to glutamic acid. This is Protein-glutamate methylesterase/protein-glutamine glutaminase 1 from Shewanella denitrificans (strain OS217 / ATCC BAA-1090 / DSM 15013).